Here is a 283-residue protein sequence, read N- to C-terminus: Thymidylate synthase (283 aa).

DUMP is bound at residue Arg22. Cys160 (nucleophile) is an active-site residue. DUMP contacts are provided by residues 180-183 (RSCD), Asn191, and 221-223 (HIY). Asp183 contacts (6R)-5,10-methylene-5,6,7,8-tetrahydrofolate. Ser282 lines the (6R)-5,10-methylene-5,6,7,8-tetrahydrofolate pocket.

It belongs to the thymidylate synthase family. Bacterial-type ThyA subfamily. As to quaternary structure, homodimer.

It is found in the cytoplasm. It carries out the reaction dUMP + (6R)-5,10-methylene-5,6,7,8-tetrahydrofolate = 7,8-dihydrofolate + dTMP. Its pathway is pyrimidine metabolism; dTTP biosynthesis. Functionally, catalyzes the reductive methylation of 2'-deoxyuridine-5'-monophosphate (dUMP) to 2'-deoxythymidine-5'-monophosphate (dTMP) while utilizing 5,10-methylenetetrahydrofolate (mTHF) as the methyl donor and reductant in the reaction, yielding dihydrofolate (DHF) as a by-product. This enzymatic reaction provides an intracellular de novo source of dTMP, an essential precursor for DNA biosynthesis. The polypeptide is Thymidylate synthase (Photobacterium profundum (strain SS9)).